We begin with the raw amino-acid sequence, 233 residues long: Large ribosomal subunit protein uL1 (233 aa).

The protein belongs to the universal ribosomal protein uL1 family. In terms of assembly, part of the 50S ribosomal subunit.

Its function is as follows. Binds directly to 23S rRNA. The L1 stalk is quite mobile in the ribosome, and is involved in E site tRNA release. Functionally, protein L1 is also a translational repressor protein, it controls the translation of the L11 operon by binding to its mRNA. The sequence is that of Large ribosomal subunit protein uL1 from Shewanella pealeana (strain ATCC 700345 / ANG-SQ1).